Consider the following 258-residue polypeptide: Imidazole glycerol phosphate synthase subunit HisF (258 aa).

Active-site residues include aspartate 11 and aspartate 130.

This sequence belongs to the HisA/HisF family. In terms of assembly, heterodimer of HisH and HisF.

Its subcellular location is the cytoplasm. It catalyses the reaction 5-[(5-phospho-1-deoxy-D-ribulos-1-ylimino)methylamino]-1-(5-phospho-beta-D-ribosyl)imidazole-4-carboxamide + L-glutamine = D-erythro-1-(imidazol-4-yl)glycerol 3-phosphate + 5-amino-1-(5-phospho-beta-D-ribosyl)imidazole-4-carboxamide + L-glutamate + H(+). It participates in amino-acid biosynthesis; L-histidine biosynthesis; L-histidine from 5-phospho-alpha-D-ribose 1-diphosphate: step 5/9. In terms of biological role, IGPS catalyzes the conversion of PRFAR and glutamine to IGP, AICAR and glutamate. The HisF subunit catalyzes the cyclization activity that produces IGP and AICAR from PRFAR using the ammonia provided by the HisH subunit. The sequence is that of Imidazole glycerol phosphate synthase subunit HisF from Methylorubrum extorquens (strain CM4 / NCIMB 13688) (Methylobacterium extorquens).